Reading from the N-terminus, the 403-residue chain is Acetylornithine aminotransferase (403 aa).

Pyridoxal 5'-phosphate contacts are provided by residues 101 to 102 and F134; that span reads GA. R137 is a binding site for N(2)-acetyl-L-ornithine. 219-222 is a binding site for pyridoxal 5'-phosphate; sequence DEVQ. An N6-(pyridoxal phosphate)lysine modification is found at K248. Residue T276 coordinates N(2)-acetyl-L-ornithine. Pyridoxal 5'-phosphate is bound at residue T277.

It belongs to the class-III pyridoxal-phosphate-dependent aminotransferase family. ArgD subfamily. In terms of assembly, homodimer. The cofactor is pyridoxal 5'-phosphate.

The protein resides in the cytoplasm. The catalysed reaction is N(2)-acetyl-L-ornithine + 2-oxoglutarate = N-acetyl-L-glutamate 5-semialdehyde + L-glutamate. It participates in amino-acid biosynthesis; L-arginine biosynthesis; N(2)-acetyl-L-ornithine from L-glutamate: step 4/4. This is Acetylornithine aminotransferase from Brucella melitensis biotype 1 (strain ATCC 23456 / CCUG 17765 / NCTC 10094 / 16M).